The following is a 228-amino-acid chain: RNA chaperone ProQ (228 aa).

Residues 107–178 (KARVQAQRAE…REEKHTPVSD (72 aa)) form a disordered region. Composition is skewed to basic and acidic residues over residues 117-136 (QQAKKREAAAAAGEKEDAPR) and 146-175 (RRKEGAERKPRADKPTTKAPRAPREEKHTP).

The protein belongs to the ProQ family.

It localises to the cytoplasm. Functionally, RNA chaperone with significant RNA binding, RNA strand exchange and RNA duplexing activities. May regulate ProP activity through an RNA-based, post-transcriptional mechanism. This chain is RNA chaperone ProQ, found in Salmonella agona (strain SL483).